Consider the following 272-residue polypeptide: Shikimate dehydrogenase (NADP(+)) (272 aa).

Residues 14-16 (SKS) and T61 each bind shikimate. K65 acts as the Proton acceptor in catalysis. NADP(+) is bound at residue E77. Shikimate-binding residues include N86 and D102. NADP(+)-binding positions include 126–130 (GAGGA), 149–154 (NRTVSR), and M213. Y215 is a shikimate binding site. G237 contributes to the NADP(+) binding site.

Belongs to the shikimate dehydrogenase family. Homodimer.

The catalysed reaction is shikimate + NADP(+) = 3-dehydroshikimate + NADPH + H(+). It participates in metabolic intermediate biosynthesis; chorismate biosynthesis; chorismate from D-erythrose 4-phosphate and phosphoenolpyruvate: step 4/7. Involved in the biosynthesis of the chorismate, which leads to the biosynthesis of aromatic amino acids. Catalyzes the reversible NADPH linked reduction of 3-dehydroshikimate (DHSA) to yield shikimate (SA). In Shigella sonnei (strain Ss046), this protein is Shikimate dehydrogenase (NADP(+)).